We begin with the raw amino-acid sequence, 1104 residues long: SWI/SNF complex subunit SMARCC1 (1104 aa).

The marR-like, BRCT and chromo domains module stretch occupies residues 27-301; that stretch reads LAVYRRKDGG…PVSFRQRIST (275 aa). The MarR-like domain maps to 37 to 163; sequence PASKFWESPD…IEKTLVQNNC (127 aa). Residues 167 to 210 enclose the BRCT; N-terminus domain; that stretch reads PNIYLIPDIDLKLANKLKDIIKRHQGTFTDEKSKASHHIYPYPS. Residue Lys-178 forms a Glycyl lysine isopeptide (Lys-Gly) (interchain with G-Cter in SUMO2) linkage. Residues 216 to 244 form the Chromo domain; that stretch reads EWLRPVMRRDKQVLVHWGFYPDSYDTWVH. The BRCT; C-terminus domain maps to 260-284; that stretch reads KPWKVHVKWILDTDVFNEWMNEEDY. The segment at 295–445 is disordered; that stretch reads FRQRISTKNE…PGEDNVTEQT (151 aa). The segment covering 301–317 has biased composition (basic and acidic residues); the sequence is TKNEEPVRSPERRDRKA. Phosphoserine occurs at positions 309, 327, and 329. The residue at position 334 (Thr-334) is a Phosphothreonine. N6-acetyllysine occurs at positions 344 and 345. Ser-349 carries the post-translational modification Phosphoserine. The residue at position 353 (Lys-353) is an N6-acetyllysine. A Phosphoserine modification is found at Ser-356. Lys-358 is modified (N6-acetyllysine; alternate). A Glycyl lysine isopeptide (Lys-Gly) (interchain with G-Cter in SUMO2); alternate cross-link involves residue Lys-358. A Phosphothreonine modification is found at Thr-397. Residues 448–545 form the SWIRM domain; the sequence is IIIPSYASWF…YQVDPESRPM (98 aa). Ser-572 is subject to Phosphoserine. Lys-591 participates in a covalent cross-link: Glycyl lysine isopeptide (Lys-Gly) (interchain with G-Cter in SUMO2). The SANT domain occupies 617–668; the sequence is SAGREWTEQETLLLLEALEMYKDDWNKVSEHVGSRTQDECILHFLRLPIEDP. A Glycyl lysine isopeptide (Lys-Gly) (interchain with G-Cter in SUMO2) cross-link involves residue Lys-738. The tract at residues 744 to 859 is disordered; that stretch reads ARASGKVDPT…DAGKKKVEHE (116 aa). The residue at position 775 (Ser-775) is a Phosphoserine. Acidic residues predominate over residues 775-784; the sequence is SEEEKMETDP. The segment covering 788–859 has biased composition (basic and acidic residues); sequence QPEKAENKVE…DAGKKKVEHE (72 aa). Lys-795 is covalently cross-linked (Glycyl lysine isopeptide (Lys-Gly) (interchain with G-Cter in SUMO2)). A phosphoserine mark is found at Ser-821 and Ser-824. Glycyl lysine isopeptide (Lys-Gly) (interchain with G-Cter in SUMO2) cross-links involve residues Lys-828 and Lys-855. A coiled-coil region spans residues 909-945; sequence KLRHFEELETIMDREKEALEQQRQQLLTERQNFHMEQ. Lys-947 is modified (N6-acetyllysine). Disordered stretches follow at residues 955–1021 and 1041–1104; these read QQME…PGPG and IHPT…SATP. Positions 956-973 are enriched in low complexity; that stretch reads QMEQQQQHGQTPQQAHQH. Pro residues-rich tracts occupy residues 994 to 1017 and 1048 to 1057; these read QQPPPYPLMHHQMPPPHPPQPGQI and PTPPGMPPMP. At Arg-1064 the chain carries Asymmetric dimethylarginine. Pro residues predominate over residues 1073–1104; the sequence is MYPPPPQQQQPPPPADGVPPPPAPGPPASATP.

This sequence belongs to the SMARCC family. As to quaternary structure, component of the multiprotein chromatin-remodeling complexes SWI/SNF: SWI/SNF-A (BAF), SWI/SNF-B (PBAF) and related complexes. The canonical complex contains a catalytic subunit (either SMARCA4/BRG1/BAF190A or SMARCA2/BRM/BAF190B) and at least SMARCE1, ACTL6A/BAF53, SMARCC1/BAF155, SMARCC2/BAF170, and SMARCB1/SNF5/BAF47. Other subunits specific to each of the complexes may also be present permitting several possible combinations developmentally and tissue specific. Component of the BAF complex, which includes at least actin (ACTB), ARID1A/BAF250A, ARID1B/BAF250B, SMARCA2/BRM, SMARCA4/BRG1, ACTL6A/BAF53, ACTL6B/BAF53B, SMARCE1/BAF57, SMARCC1/BAF155, SMARCC2/BAF170, SMARCB1/SNF5/INI1, and one or more SMARCD1/BAF60A, SMARCD2/BAF60B, or SMARCD3/BAF60C. In muscle cells, the BAF complex also contains DPF3. Component of neural progenitors-specific chromatin remodeling complex (npBAF complex) composed of at least, ARID1A/BAF250A or ARID1B/BAF250B, SMARCD1/BAF60A, SMARCD3/BAF60C, SMARCA2/BRM/BAF190B, SMARCA4/BRG1/BAF190A, SMARCB1/BAF47, SMARCC1/BAF155, SMARCE1/BAF57, SMARCC2/BAF170, PHF10/BAF45A, ACTL6A/BAF53A and actin. Component of neuron-specific chromatin remodeling complex (nBAF complex) composed of at least, ARID1A/BAF250A or ARID1B/BAF250B, SMARCD1/BAF60A, SMARCD3/BAF60C, SMARCA2/BRM/BAF190B, SMARCA4/BRG1/BAF190A, SMARCB1/BAF47, SMARCC1/BAF155, SMARCE1/BAF57, SMARCC2/BAF170, DPF1/BAF45B, DPF3/BAF45C, ACTL6B/BAF53B and actin. Component of the SWI/SNF-B (PBAF) chromatin remodeling complex, at least composed of SMARCA4/BRG1, SMARCB1/BAF47/SNF5, ACTL6A/BAF53A or ACTL6B/BAF53B, SMARCE1/BAF57, SMARCD1/BAF60A, SMARCD2/BAF60B, perhaps SMARCD3/BAF60C, SMARCC1/BAF155, SMARCC2/BAF170, PBRM1/BAF180, ARID2/BAF200 and actin. Component of SWI/SNF (GBAF) subcomplex, which includes at least BICRA or BICRAL (mutually exclusive), BRD9, SS18, SMARCA2/BRM, SMARCA4/BRG1/BAF190A, ACTL6A/BAF53, SMARCC1/BAF155, and SMARCD1/BAF60A. May also interact with the SIN3A histone deacetylase transcription repressor complex in conjunction with SMARCA2 and SMARCA4. The minimal complex composed of SMARCC1 and SMARCA4 seems to be able to associate with cyclin such as CCNE1 or transcription factors such as KLF1 or GATA1. Interacts with NR3C1 and SMARD1. Interacts with TRIP12; leading to disrupt interaction between TRIP12 and SMARCE1 and prevent SMARCE1 ubiquitination. Interacts with CEBPB (when not methylated). Interacts with KDM6B. Interacts with MKKS; the interaction takes place predominantly in the cytoplasm and may modulate SMARCC1 location. Interacts with DPF2. Interacts with PRDM1/BLIMP1. Interacts with DPF3a (isoform 2 of DPF3/BAF45C) and with HDGFL2 in a DPF3a-dependent manner. As to expression, highly expressed in adult brain, testis and thymus.

It is found in the nucleus. It localises to the cytoplasm. Its function is as follows. Involved in transcriptional activation and repression of select genes by chromatin remodeling (alteration of DNA-nucleosome topology). Component of SWI/SNF chromatin remodeling complexes that carry out key enzymatic activities, changing chromatin structure by altering DNA-histone contacts within a nucleosome in an ATP-dependent manner. May stimulate the ATPase activity of the catalytic subunit of the complex. Belongs to the neural progenitors-specific chromatin remodeling complex (npBAF complex) and the neuron-specific chromatin remodeling complex (nBAF complex). During neural development a switch from a stem/progenitor to a postmitotic chromatin remodeling mechanism occurs as neurons exit the cell cycle and become committed to their adult state. The transition from proliferating neural stem/progenitor cells to postmitotic neurons requires a switch in subunit composition of the npBAF and nBAF complexes. As neural progenitors exit mitosis and differentiate into neurons, npBAF complexes which contain ACTL6A/BAF53A and PHF10/BAF45A, are exchanged for homologous alternative ACTL6B/BAF53B and DPF1/BAF45B or DPF3/BAF45C subunits in neuron-specific complexes (nBAF). The npBAF complex is essential for the self-renewal/proliferative capacity of the multipotent neural stem cells. The nBAF complex along with CREST plays a role regulating the activity of genes essential for dendrite growth. The polypeptide is SWI/SNF complex subunit SMARCC1 (Smarcc1) (Mus musculus (Mouse)).